The sequence spans 130 residues: Small ribosomal subunit protein uS8 (130 aa).

Belongs to the universal ribosomal protein uS8 family. As to quaternary structure, part of the 30S ribosomal subunit. Contacts proteins S5 and S12.

In terms of biological role, one of the primary rRNA binding proteins, it binds directly to 16S rRNA central domain where it helps coordinate assembly of the platform of the 30S subunit. The protein is Small ribosomal subunit protein uS8 of Haemophilus ducreyi (strain 35000HP / ATCC 700724).